Here is a 392-residue protein sequence, read N- to C-terminus: Probable protein phosphatase 2C 22 (392 aa).

Positions 1–26 (MEETRGISDPENGSSSYGGKPPNPLS) are disordered. Positions 89-356 (RSGAWSDIGS…DNVTAVVVCL (268 aa)) constitute a PPM-type phosphatase domain. The Mn(2+) site is built by aspartate 133, glycine 134, aspartate 304, and aspartate 347.

The protein belongs to the PP2C family. The cofactor is Mg(2+). Mn(2+) serves as cofactor.

It catalyses the reaction O-phospho-L-seryl-[protein] + H2O = L-seryl-[protein] + phosphate. The enzyme catalyses O-phospho-L-threonyl-[protein] + H2O = L-threonyl-[protein] + phosphate. The protein is Probable protein phosphatase 2C 22 of Arabidopsis thaliana (Mouse-ear cress).